The chain runs to 242 residues: Phosphoribosylaminoimidazole-succinocarboxamide synthase (242 aa).

The protein belongs to the SAICAR synthetase family.

The catalysed reaction is 5-amino-1-(5-phospho-D-ribosyl)imidazole-4-carboxylate + L-aspartate + ATP = (2S)-2-[5-amino-1-(5-phospho-beta-D-ribosyl)imidazole-4-carboxamido]succinate + ADP + phosphate + 2 H(+). Its pathway is purine metabolism; IMP biosynthesis via de novo pathway; 5-amino-1-(5-phospho-D-ribosyl)imidazole-4-carboxamide from 5-amino-1-(5-phospho-D-ribosyl)imidazole-4-carboxylate: step 1/2. The chain is Phosphoribosylaminoimidazole-succinocarboxamide synthase from Prochlorococcus marinus subsp. pastoris (strain CCMP1986 / NIES-2087 / MED4).